A 79-amino-acid polypeptide reads, in one-letter code: Sec-independent protein translocase protein TatA (79 aa).

Residues 1 to 21 (MGGLQPWHWVIVIAVFVLLFG) traverse the membrane as a helical segment. Residues 43-52 (IKEMQSEGKS) show a composition bias toward basic and acidic residues. The interval 43-79 (IKEMQSEGKSDNPPATPITSERVDTNPTAEQPDKRSA) is disordered.

This sequence belongs to the TatA/E family. The Tat system comprises two distinct complexes: a TatABC complex, containing multiple copies of TatA, TatB and TatC subunits, and a separate TatA complex, containing only TatA subunits. Substrates initially bind to the TatABC complex, which probably triggers association of the separate TatA complex to form the active translocon.

Its subcellular location is the cell membrane. In terms of biological role, part of the twin-arginine translocation (Tat) system that transports large folded proteins containing a characteristic twin-arginine motif in their signal peptide across membranes. TatA could form the protein-conducting channel of the Tat system. This chain is Sec-independent protein translocase protein TatA, found in Mycobacterium sp. (strain JLS).